The primary structure comprises 236 residues: Lectin alpha chain (236 aa).

Mn(2+)-binding residues include Glu-8 and Asp-10. Residues Asp-10, Tyr-12, Asn-14, and Asp-19 each coordinate Ca(2+). Tyr-12 is an a carbohydrate binding site. The Mn(2+) site is built by Asp-19, His-24, and Ser-34. 99-100 lines the a carbohydrate pocket; the sequence is LY. Asp-207 contributes to the Ca(2+) binding site. Arg-227 provides a ligand contact to a carbohydrate.

It belongs to the leguminous lectin family. In terms of assembly, equilibrium between homodimer and homotetramer. Oligomerization is pH-dependent with homotetramers forming at pH 6.5 and above. Post-translationally, the beta and gamma chains are produced by partial proteolytic processing of the lectin alpha chain by an asparaginyl endopeptidase. Mixture of 60% alpha lectin and 40% of its beta and gamma proteolytic fragments. As to expression, seed.

Its function is as follows. D-mannose/D-glucose-binding lectin. Has anti-inflammatory activity in rats. Induces histamine release in mast cells from rat. Induces lymphocyte proliferation and IFNG production. In Cratylia argentea (Cratylia floribunda), this protein is Lectin alpha chain.